The primary structure comprises 115 residues: Insulin-like peptide IlO1_i1 (115 aa).

Positions 1–20 are cleaved as a signal peptide; that stretch reads MFVYTTIMLLLLAEINHSQG. Cystine bridges form between Cys40–Cys101, Cys52–Cys114, and Cys100–Cys105. Positions 59–93 are cleaved as a propeptide — c peptide; it reads RRNRITGLDQRSIFESNLLAKRFLISRRQIVNNRR.

It belongs to the insulin family. Expressed in tentacles.

The protein resides in the secreted. Its function is as follows. Heterodimer with unknown function. Surprisingly, the truncated synthetic analog (dimer of 27-58 and 94-115) does not bind to long insulin receptor (HIR-B) and insulin-like growth factor 1 receptor. This truncated synthetic analog shows very weak inhibitory activity on different voltage-gated channels. The sequence is that of Insulin-like peptide IlO1_i1 from Oulactis sp. (Sea anemone).